The chain runs to 75 residues: uncharacterized protein (75 aa).

A Glutaredoxin domain is found at 1–75 (MIKIYSTPTC…KAEIDKLIEK (75 aa)). Cys10 and Cys13 are oxidised to a cystine.

It belongs to the glutaredoxin family.

This is an uncharacterized protein from Clostridium pasteurianum.